Here is a 615-residue protein sequence, read N- to C-terminus: Dihydroxy-acid dehydratase (615 aa).

Asp81 is a binding site for Mg(2+). Position 122 (Cys122) interacts with [2Fe-2S] cluster. The Mg(2+) site is built by Asp123 and Lys124. Lys124 is subject to N6-carboxylysine. Position 195 (Cys195) interacts with [2Fe-2S] cluster. Glu491 is a Mg(2+) binding site. Catalysis depends on Ser517, which acts as the Proton acceptor.

This sequence belongs to the IlvD/Edd family. In terms of assembly, homodimer. Requires [2Fe-2S] cluster as cofactor. The cofactor is Mg(2+).

The enzyme catalyses (2R)-2,3-dihydroxy-3-methylbutanoate = 3-methyl-2-oxobutanoate + H2O. It carries out the reaction (2R,3R)-2,3-dihydroxy-3-methylpentanoate = (S)-3-methyl-2-oxopentanoate + H2O. It participates in amino-acid biosynthesis; L-isoleucine biosynthesis; L-isoleucine from 2-oxobutanoate: step 3/4. The protein operates within amino-acid biosynthesis; L-valine biosynthesis; L-valine from pyruvate: step 3/4. In terms of biological role, functions in the biosynthesis of branched-chain amino acids. Catalyzes the dehydration of (2R,3R)-2,3-dihydroxy-3-methylpentanoate (2,3-dihydroxy-3-methylvalerate) into 2-oxo-3-methylpentanoate (2-oxo-3-methylvalerate) and of (2R)-2,3-dihydroxy-3-methylbutanoate (2,3-dihydroxyisovalerate) into 2-oxo-3-methylbutanoate (2-oxoisovalerate), the penultimate precursor to L-isoleucine and L-valine, respectively. This chain is Dihydroxy-acid dehydratase, found in Shewanella pealeana (strain ATCC 700345 / ANG-SQ1).